We begin with the raw amino-acid sequence, 287 residues long: MTFSQMILNLQNYWQEQGCVIMQPYDMPAGAGTFHPATFLRSLGKKPWAVAYVAPSRRPTDGRYGENPNRLGAYYQFQVLIKPSPDNIQELYLKSLENLGFDLKSHDIRFVEDNWESPSLGAWGLGWEVWLDGMEVTQFTYFQQVGGIAVDLVSAEITYGLERIAMYLQNVDNVYDIVWSEFNGEKIKYADVHKQSEYEFSKYNFEVSDVKILNEQFENSYKECKNILEQGLALPAYDYCMLAAHTFNLLDARGAISVAQRQDYMLKIRELSKNCAEIYKKNLNETE.

The protein belongs to the class-II aminoacyl-tRNA synthetase family. Tetramer of two alpha and two beta subunits.

Its subcellular location is the cytoplasm. It catalyses the reaction tRNA(Gly) + glycine + ATP = glycyl-tRNA(Gly) + AMP + diphosphate. The protein is Glycine--tRNA ligase alpha subunit of Campylobacter jejuni subsp. doylei (strain ATCC BAA-1458 / RM4099 / 269.97).